The sequence spans 96 residues: Putative septation protein SpoVG (96 aa).

Belongs to the SpoVG family.

In terms of biological role, could be involved in septation. The protein is Putative septation protein SpoVG of Borrelia hermsii (strain HS1 / DAH).